The primary structure comprises 542 residues: Chaperonin GroEL (542 aa).

Residues 29-32, Lys-50, 86-90, Gly-413, 477-479, and Asp-493 each bind ATP; these read TLGP, DGTTT, and NAA.

This sequence belongs to the chaperonin (HSP60) family. Forms a cylinder of 14 subunits composed of two heptameric rings stacked back-to-back. Interacts with the co-chaperonin GroES.

The protein localises to the cytoplasm. The enzyme catalyses ATP + H2O + a folded polypeptide = ADP + phosphate + an unfolded polypeptide.. Together with its co-chaperonin GroES, plays an essential role in assisting protein folding. The GroEL-GroES system forms a nano-cage that allows encapsulation of the non-native substrate proteins and provides a physical environment optimized to promote and accelerate protein folding. This Solibacter usitatus (strain Ellin6076) protein is Chaperonin GroEL.